We begin with the raw amino-acid sequence, 129 residues long: Class I hydrophobin 11 (129 aa).

The N-terminal stretch at 1–19 is a signal peptide; that stretch reads MRLTPLLAALALPLLTVLA. 4 disulfide bridges follow: Cys-48–Cys-106, Cys-55–Cys-100, Cys-56–Cys-89, and Cys-107–Cys-122.

Belongs to the fungal hydrophobin family. As to quaternary structure, self-assembles to form functional amyloid fibrils called rodlets. Self-assembly into fibrillar rodlets occurs spontaneously at hydrophobic:hydrophilic interfaces and the rodlets further associate laterally to form amphipathic monolayers.

The protein resides in the secreted. The protein localises to the cell wall. Its function is as follows. Aerial growth, conidiation, and dispersal of filamentous fungi in the environment rely upon a capability of their secreting small amphipathic proteins called hydrophobins (HPBs) with low sequence identity. Class I can self-assemble into an outermost layer of rodlet bundles on aerial cell surfaces, conferring cellular hydrophobicity that supports fungal growth, development and dispersal; whereas Class II form highly ordered films at water-air interfaces through intermolecular interactions but contribute nothing to the rodlet structure. The protein is Class I hydrophobin 11 of Pleurotus ostreatus (strain PC15) (Oyster mushroom).